A 118-amino-acid polypeptide reads, in one-letter code: C-type natriuretic peptide 2 (118 aa).

The N-terminal stretch at methionine 1–alanine 22 is a signal peptide. Residues lysine 23 to lysine 96 constitute a propeptide that is removed on maturation. Cysteine 102 and cysteine 118 are oxidised to a cystine.

This sequence belongs to the natriuretic peptide family.

Its subcellular location is the secreted. In terms of biological role, exhibits natriuretic and vasodepressor activity. Has a cGMP-stimulating activity. The sequence is that of C-type natriuretic peptide 2 from Aquarana catesbeiana (American bullfrog).